Reading from the N-terminus, the 465-residue chain is uncharacterized protein (465 aa).

The next 11 helical transmembrane spans lie at 19-39, 50-70, 91-111, 140-160, 164-184, 201-221, 244-264, 288-308, 342-362, 363-383, and 403-423; these read VLGP…GEYM, MIAG…VAMI, IVGP…YTML, FIVL…LATL, LVIT…VQFG, PYGW…YLGI, AGIM…SGLM, LMVL…NGCI, IVFL…DQVV, TFSI…MVMF, and LPTV…FLGY.

Belongs to the amino acid-polyamine-organocation (APC) superfamily.

The protein resides in the cell membrane. Functionally, probable amino-acid or metabolite transport protein. This is an uncharacterized protein from Rhizobium meliloti (strain 1021) (Ensifer meliloti).